The chain runs to 151 residues: Large ribosomal subunit protein uL22 (151 aa).

A compositionally biased stretch (polar residues) spans 1–18 (MARINYSINGDPETTSKA). Residues 1 to 23 (MARINYSINGDPETTSKAMGSEL) are disordered.

Belongs to the universal ribosomal protein uL22 family. Part of the 50S ribosomal subunit.

Functionally, this protein binds specifically to 23S rRNA. It makes multiple contacts with different domains of the 23S rRNA in the assembled 50S subunit and ribosome. The globular domain of the protein is located near the polypeptide exit tunnel on the outside of the subunit, while an extended beta-hairpin is found that lines the wall of the exit tunnel in the center of the 70S ribosome. The protein is Large ribosomal subunit protein uL22 of Methanosarcina acetivorans (strain ATCC 35395 / DSM 2834 / JCM 12185 / C2A).